The primary structure comprises 484 residues: UDP-N-acetylmuramate--L-alanine ligase (484 aa).

An ATP-binding site is contributed by Gly128–Thr134.

It belongs to the MurCDEF family.

The protein localises to the cytoplasm. It catalyses the reaction UDP-N-acetyl-alpha-D-muramate + L-alanine + ATP = UDP-N-acetyl-alpha-D-muramoyl-L-alanine + ADP + phosphate + H(+). It participates in cell wall biogenesis; peptidoglycan biosynthesis. Functionally, cell wall formation. The protein is UDP-N-acetylmuramate--L-alanine ligase of Shewanella loihica (strain ATCC BAA-1088 / PV-4).